Consider the following 267-residue polypeptide: 3-deoxy-manno-octulosonate cytidylyltransferase 2 (267 aa).

It belongs to the KdsB family.

It is found in the cytoplasm. It carries out the reaction 3-deoxy-alpha-D-manno-oct-2-ulosonate + CTP = CMP-3-deoxy-beta-D-manno-octulosonate + diphosphate. It participates in nucleotide-sugar biosynthesis; CMP-3-deoxy-D-manno-octulosonate biosynthesis; CMP-3-deoxy-D-manno-octulosonate from 3-deoxy-D-manno-octulosonate and CTP: step 1/1. Its pathway is bacterial outer membrane biogenesis; lipopolysaccharide biosynthesis. In terms of biological role, activates KDO (a required 8-carbon sugar) for incorporation into bacterial lipopolysaccharide in Gram-negative bacteria. This chain is 3-deoxy-manno-octulosonate cytidylyltransferase 2, found in Burkholderia ambifaria (strain MC40-6).